A 616-amino-acid polypeptide reads, in one-letter code: Chaperone protein HtpG (616 aa).

The segment at 1 to 333 (MKKQFDTEVN…CQDLPLNVSR (333 aa)) is a; substrate-binding. The b stretch occupies residues 334 to 542 (EILQQNKILS…SNDPTYQMQK (209 aa)). Residues 543–616 (IMLSMGQEVK…INEFLEKDLL (74 aa)) form a c region.

This sequence belongs to the heat shock protein 90 family. Homodimer.

The protein resides in the cytoplasm. Molecular chaperone. Has ATPase activity. The chain is Chaperone protein HtpG from Borreliella afzelii (strain PKo) (Borrelia afzelii).